The chain runs to 366 residues: tRNA/tmRNA (uracil-C(5))-methyltransferase (366 aa).

S-adenosyl-L-methionine is bound by residues glutamine 190, tyrosine 218, asparagine 223, glutamate 239, and aspartate 299. Cysteine 324 (nucleophile) is an active-site residue. Catalysis depends on glutamate 358, which acts as the Proton acceptor.

This sequence belongs to the class I-like SAM-binding methyltransferase superfamily. RNA M5U methyltransferase family. TrmA subfamily.

The enzyme catalyses uridine(54) in tRNA + S-adenosyl-L-methionine = 5-methyluridine(54) in tRNA + S-adenosyl-L-homocysteine + H(+). It catalyses the reaction uridine(341) in tmRNA + S-adenosyl-L-methionine = 5-methyluridine(341) in tmRNA + S-adenosyl-L-homocysteine + H(+). Dual-specificity methyltransferase that catalyzes the formation of 5-methyluridine at position 54 (m5U54) in all tRNAs, and that of position 341 (m5U341) in tmRNA (transfer-mRNA). The sequence is that of tRNA/tmRNA (uracil-C(5))-methyltransferase from Escherichia coli O17:K52:H18 (strain UMN026 / ExPEC).